A 340-amino-acid polypeptide reads, in one-letter code: Glyceraldehyde-3-phosphate dehydrogenase (340 aa).

Residues 11-12 (SI) and Gly111 each bind NAD(+). Residue 140-142 (SCN) participates in D-glyceraldehyde 3-phosphate binding. Cys141 serves as the catalytic Nucleophile. An NAD(+)-binding site is contributed by Arg169. 195–196 (HG) provides a ligand contact to D-glyceraldehyde 3-phosphate. Gln303 is an NAD(+) binding site.

The protein belongs to the glyceraldehyde-3-phosphate dehydrogenase family. In terms of assembly, homotetramer.

It localises to the cytoplasm. It catalyses the reaction D-glyceraldehyde 3-phosphate + phosphate + NADP(+) = (2R)-3-phospho-glyceroyl phosphate + NADPH + H(+). The catalysed reaction is D-glyceraldehyde 3-phosphate + phosphate + NAD(+) = (2R)-3-phospho-glyceroyl phosphate + NADH + H(+). It participates in carbohydrate degradation; glycolysis; pyruvate from D-glyceraldehyde 3-phosphate: step 1/5. In Methanococcus vannielii (strain ATCC 35089 / DSM 1224 / JCM 13029 / OCM 148 / SB), this protein is Glyceraldehyde-3-phosphate dehydrogenase.